The chain runs to 364 residues: Probable dual-specificity RNA methyltransferase RlmN (364 aa).

The active-site Proton acceptor is the E107. A Radical SAM core domain is found at 113 to 346; the sequence is HEYGNSVCVT…ATIRREQGSD (234 aa). The cysteines at positions 120 and 351 are disulfide-linked. C127, C131, and C134 together coordinate [4Fe-4S] cluster. Residues 177 to 178, S209, 232 to 234, and N308 each bind S-adenosyl-L-methionine; these read GE and SLH. Residue C351 is the S-methylcysteine intermediate of the active site.

It belongs to the radical SAM superfamily. RlmN family. [4Fe-4S] cluster is required as a cofactor.

It is found in the cytoplasm. The enzyme catalyses adenosine(2503) in 23S rRNA + 2 reduced [2Fe-2S]-[ferredoxin] + 2 S-adenosyl-L-methionine = 2-methyladenosine(2503) in 23S rRNA + 5'-deoxyadenosine + L-methionine + 2 oxidized [2Fe-2S]-[ferredoxin] + S-adenosyl-L-homocysteine. The catalysed reaction is adenosine(37) in tRNA + 2 reduced [2Fe-2S]-[ferredoxin] + 2 S-adenosyl-L-methionine = 2-methyladenosine(37) in tRNA + 5'-deoxyadenosine + L-methionine + 2 oxidized [2Fe-2S]-[ferredoxin] + S-adenosyl-L-homocysteine. Specifically methylates position 2 of adenine 2503 in 23S rRNA and position 2 of adenine 37 in tRNAs. Confers resistance to some classes of antibiotics. In Staphylococcus epidermidis (strain ATCC 12228 / FDA PCI 1200), this protein is Probable dual-specificity RNA methyltransferase RlmN.